A 211-amino-acid polypeptide reads, in one-letter code: Ribonuclease HII (211 aa).

Residues 21–211 (SSIAGLDEAG…APLKSMFDVI (191 aa)) form the RNase H type-2 domain. A divalent metal cation-binding residues include Asp-27, Glu-28, and Asp-122.

This sequence belongs to the RNase HII family. It depends on Mn(2+) as a cofactor. Requires Mg(2+) as cofactor.

It localises to the cytoplasm. The catalysed reaction is Endonucleolytic cleavage to 5'-phosphomonoester.. In terms of biological role, endonuclease that specifically degrades the RNA of RNA-DNA hybrids. In Dehalococcoides mccartyi (strain ATCC BAA-2266 / KCTC 15142 / 195) (Dehalococcoides ethenogenes (strain 195)), this protein is Ribonuclease HII.